The primary structure comprises 76 residues: ATP synthase subunit 9, mitochondrial (76 aa).

A run of 2 helical transmembrane segments spans residues 13-35 (GISTIGLLGAGIGIAIVFAALIQ) and 50-72 (FAILGFAISEATGLFCLMISFLL).

Belongs to the ATPase C chain family. As to quaternary structure, F-type ATPases have 2 components, CF(1) - the catalytic core - and CF(0) - the membrane proton channel. In yeast, the dimeric form of ATP synthase consists of 18 polypeptides: alpha, beta, gamma, delta, epsilon, 4 (B), 5 (OSCP), 6 (A), 8, 9 (C), d, E (Tim11), f, g, h, i, j and k.

It is found in the mitochondrion membrane. Its function is as follows. Mitochondrial membrane ATP synthase (F(1)F(0) ATP synthase or Complex V) produces ATP from ADP in the presence of a proton gradient across the membrane which is generated by electron transport complexes of the respiratory chain. F-type ATPases consist of two structural domains, F(1) - containing the extramembraneous catalytic core and F(0) - containing the membrane proton channel, linked together by a central stalk and a peripheral stalk. During catalysis, ATP synthesis in the catalytic domain of F(1) is coupled via a rotary mechanism of the central stalk subunits to proton translocation. Part of the complex F(0) domain. A homomeric c-ring of probably 10 subunits is part of the complex rotary element. The protein is ATP synthase subunit 9, mitochondrial (ATP9) of Eremothecium gossypii (strain ATCC 10895 / CBS 109.51 / FGSC 9923 / NRRL Y-1056) (Yeast).